Reading from the N-terminus, the 266-residue chain is Non-structural maintenance of chromosomes element 1 homolog (266 aa).

Residues 1–102 form an interaction with NSMCE3 region; it reads MQGSTRRAGA…SVSKMATDFA (102 aa). An RING-type; atypical zinc finger spans residues 191–232; sequence CNICHSLLIQGQSCETCGIRMHLPCVAKYFQSTAEPRCPHCN. The segment at 246–266 is disordered; sequence EKEREAGISKSSRKSLRTRQH. Basic residues predominate over residues 256-266; that stretch reads SSRKSLRTRQH.

This sequence belongs to the NSE1 family. In terms of assembly, component of the SMC5-SMC6 complex which consists at least of SMC5, SMC6, NSMCE2, NSMCE1, NSMCE4A or EID3 and NSMCE3. NSMCE1, NSMCE4A or EID3 and NSMCE3 probably form a subcomplex that bridges the head domains of the SMC5-SMC6 heterodimer. Interacts with NSMCE3. Post-translationally, ubiquitinated.

The protein localises to the nucleus. It localises to the chromosome. Its subcellular location is the telomere. It catalyses the reaction S-ubiquitinyl-[E2 ubiquitin-conjugating enzyme]-L-cysteine + [acceptor protein]-L-lysine = [E2 ubiquitin-conjugating enzyme]-L-cysteine + N(6)-ubiquitinyl-[acceptor protein]-L-lysine.. Functionally, RING-type zinc finger-containing E3 ubiquitin ligase that assembles with melanoma antigen protein (MAGE) to catalyze the direct transfer of ubiquitin from E2 ubiquitin-conjugating enzyme to a specific substrate. Within MAGE-RING ubiquitin ligase complex, MAGE stimulates and specifies ubiquitin ligase activity likely through recruitment and/or stabilization of the E2 ubiquitin-conjugating enzyme at the E3:substrate complex. Involved in maintenance of genome integrity, DNA damage response and DNA repair. NSMCE3/MAGEG1 and NSMCE1 ubiquitin ligase are components of SMC5-SMC6 complex and may positively regulate homologous recombination-mediated DNA repair. The protein is Non-structural maintenance of chromosomes element 1 homolog (Nsmce1) of Rattus norvegicus (Rat).